The sequence spans 139 residues: NADH-quinone oxidoreductase subunit A (139 aa).

3 helical membrane passes run 16–36 (GLFIIAVFALCALMIGAASLL), 69–89 (LVAMLFVIFDIEAVFLFAWAV), and 94–114 (VGWEGFAGAAVFIFILLAGLV).

Belongs to the complex I subunit 3 family. In terms of assembly, NDH-1 is composed of 14 different subunits. Subunits NuoA, H, J, K, L, M, N constitute the membrane sector of the complex.

The protein localises to the cell inner membrane. The catalysed reaction is a quinone + NADH + 5 H(+)(in) = a quinol + NAD(+) + 4 H(+)(out). In terms of biological role, NDH-1 shuttles electrons from NADH, via FMN and iron-sulfur (Fe-S) centers, to quinones in the respiratory chain. The immediate electron acceptor for the enzyme in this species is believed to be ubiquinone. Couples the redox reaction to proton translocation (for every two electrons transferred, four hydrogen ions are translocated across the cytoplasmic membrane), and thus conserves the redox energy in a proton gradient. The protein is NADH-quinone oxidoreductase subunit A of Chromohalobacter salexigens (strain ATCC BAA-138 / DSM 3043 / CIP 106854 / NCIMB 13768 / 1H11).